The chain runs to 422 residues: Serine--tRNA ligase (422 aa).

229 to 231 (TAE) provides a ligand contact to L-serine. ATP is bound at residue 260–262 (RKE). E283 is a binding site for L-serine. An ATP-binding site is contributed by 347–350 (EISS). S383 lines the L-serine pocket.

It belongs to the class-II aminoacyl-tRNA synthetase family. Type-1 seryl-tRNA synthetase subfamily. As to quaternary structure, homodimer. The tRNA molecule binds across the dimer.

Its subcellular location is the cytoplasm. The enzyme catalyses tRNA(Ser) + L-serine + ATP = L-seryl-tRNA(Ser) + AMP + diphosphate + H(+). The catalysed reaction is tRNA(Sec) + L-serine + ATP = L-seryl-tRNA(Sec) + AMP + diphosphate + H(+). Its pathway is aminoacyl-tRNA biosynthesis; selenocysteinyl-tRNA(Sec) biosynthesis; L-seryl-tRNA(Sec) from L-serine and tRNA(Sec): step 1/1. Functionally, catalyzes the attachment of serine to tRNA(Ser). Is also able to aminoacylate tRNA(Sec) with serine, to form the misacylated tRNA L-seryl-tRNA(Sec), which will be further converted into selenocysteinyl-tRNA(Sec). The chain is Serine--tRNA ligase from Geobacter sp. (strain M21).